A 219-amino-acid chain; its full sequence is Multiple organellar RNA editing factor 2, chloroplastic (219 aa).

The N-terminal 48 residues, 1–48 (MALPLSGTRHLTRALLSNVTLMAPPRIPSSVHYGGSRLGCSTRFFSIR), are a transit peptide targeting the chloroplast. Positions 182–219 (VQRSPERQRRVEPQPQRAQDRPRYNDRTRYSRRRENTR) are disordered. The span at 185 to 219 (SPERQRRVEPQPQRAQDRPRYNDRTRYSRRRENTR) shows a compositional bias: basic and acidic residues.

Belongs to the MORF family. As to quaternary structure, homodimer and heterodimer with MORF9. Interacts with protoporphyrinogen oxidase 1 PPOX1. Heterodimers with MORF8/RIP1 and MORF9/RIP9. Interacts with PCMP-A2/PMD1. Interacts with ORRM1. Interacts with ORRM6.

It is found in the plastid. It localises to the chloroplast. Functionally, involved in plastid rRNA processing and consequently in translation and early chloroplast differentiation. Involved in organellar RNA editing. Required for the processing of multiple editing sites in plastids. In Arabidopsis thaliana (Mouse-ear cress), this protein is Multiple organellar RNA editing factor 2, chloroplastic.